The primary structure comprises 428 residues: 3-phosphoshikimate 1-carboxyvinyltransferase (428 aa).

Positions 23, 24, and 28 each coordinate 3-phosphoshikimate. Lysine 23 serves as a coordination point for phosphoenolpyruvate. Phosphoenolpyruvate-binding residues include glycine 92 and arginine 120. Residues serine 165, glutamine 167, aspartate 312, and lysine 339 each coordinate 3-phosphoshikimate. Glutamine 167 is a binding site for phosphoenolpyruvate. Aspartate 312 serves as the catalytic Proton acceptor. Phosphoenolpyruvate-binding residues include arginine 343 and arginine 384.

This sequence belongs to the EPSP synthase family. Monomer.

It is found in the cytoplasm. The enzyme catalyses 3-phosphoshikimate + phosphoenolpyruvate = 5-O-(1-carboxyvinyl)-3-phosphoshikimate + phosphate. It participates in metabolic intermediate biosynthesis; chorismate biosynthesis; chorismate from D-erythrose 4-phosphate and phosphoenolpyruvate: step 6/7. Catalyzes the transfer of the enolpyruvyl moiety of phosphoenolpyruvate (PEP) to the 5-hydroxyl of shikimate-3-phosphate (S3P) to produce enolpyruvyl shikimate-3-phosphate and inorganic phosphate. This chain is 3-phosphoshikimate 1-carboxyvinyltransferase, found in Sulfurimonas denitrificans (strain ATCC 33889 / DSM 1251) (Thiomicrospira denitrificans (strain ATCC 33889 / DSM 1251)).